Here is a 198-residue protein sequence, read N- to C-terminus: FMN-dependent NADH:quinone oxidoreductase (198 aa).

92 to 95 (MWNL) lines the FMN pocket.

This sequence belongs to the azoreductase type 1 family. In terms of assembly, homodimer. Requires FMN as cofactor.

It carries out the reaction 2 a quinone + NADH + H(+) = 2 a 1,4-benzosemiquinone + NAD(+). The catalysed reaction is N,N-dimethyl-1,4-phenylenediamine + anthranilate + 2 NAD(+) = 2-(4-dimethylaminophenyl)diazenylbenzoate + 2 NADH + 2 H(+). Its function is as follows. Quinone reductase that provides resistance to thiol-specific stress caused by electrophilic quinones. Functionally, also exhibits azoreductase activity. Catalyzes the reductive cleavage of the azo bond in aromatic azo compounds to the corresponding amines. This is FMN-dependent NADH:quinone oxidoreductase from Lachnoclostridium phytofermentans (strain ATCC 700394 / DSM 18823 / ISDg) (Clostridium phytofermentans).